The primary structure comprises 327 residues: Small ribosomal subunit protein uS2 (327 aa).

The tract at residues 258 to 327 (AGHTPVSETL…PGVADGAALE (70 aa)) is disordered.

Belongs to the universal ribosomal protein uS2 family.

The protein is Small ribosomal subunit protein uS2 of Anaplasma marginale (strain St. Maries).